Consider the following 384-residue polypeptide: Cysteine protease ATG4B (384 aa).

The active-site Nucleophile is the cysteine 74. Catalysis depends on residues aspartate 269 and histidine 271. The LIR signature appears at phenylalanine 379 to leucine 382.

This sequence belongs to the peptidase C54 family.

The protein localises to the cytoplasm. It localises to the cytosol. The protein resides in the cytoplasmic vesicle. Its subcellular location is the autophagosome. It is found in the endoplasmic reticulum. The protein localises to the mitochondrion. It catalyses the reaction [protein]-C-terminal L-amino acid-glycyl-phosphatidylethanolamide + H2O = [protein]-C-terminal L-amino acid-glycine + a 1,2-diacyl-sn-glycero-3-phosphoethanolamine. It carries out the reaction [protein]-C-terminal L-amino acid-glycyl-phosphatidylserine + H2O = [protein]-C-terminal L-amino acid-glycine + a 1,2-diacyl-sn-glycero-3-phospho-L-serine. Cysteine protease that plays a key role in autophagy by mediating both proteolytic activation and delipidation of ATG8 family proteins. Required for canonical autophagy (macroautophagy), non-canonical autophagy as well as for mitophagy. The protease activity is required for proteolytic activation of ATG8 family proteins: cleaves the C-terminal amino acid of ATG8 proteins to reveal a C-terminal glycine. Exposure of the glycine at the C-terminus is essential for ATG8 proteins conjugation to phosphatidylethanolamine (PE) and insertion to membranes, which is necessary for autophagy. Protease activity is also required to counteract formation of high-molecular weight conjugates of ATG8 proteins (ATG8ylation): acts as a deubiquitinating-like enzyme that removes ATG8 conjugated to other proteins, such as ATG3. In addition to the protease activity, also mediates delipidation of ATG8 family proteins. Catalyzes delipidation of PE-conjugated forms of ATG8 proteins during macroautophagy. Also involved in non-canonical autophagy, a parallel pathway involving conjugation of ATG8 proteins to single membranes at endolysosomal compartments, by catalyzing delipidation of ATG8 proteins conjugated to phosphatidylserine (PS). The protein is Cysteine protease ATG4B of Xenopus laevis (African clawed frog).